A 380-amino-acid polypeptide reads, in one-letter code: Protein phosphatase methylesterase 1 (380 aa).

Positions 1–38 (MSALEKSMHLGRLPSRPPLPGSGGSQSGAKMRMGPGRK) are disordered. Position 15 is a phosphoserine (S15). An Asymmetric dimethylarginine; alternate modification is found at R16. R16 carries the omega-N-methylarginine; alternate modification. A Phosphoserine modification is found at S42. Active-site residues include S156 and D181. Positions 255-265 (IEEEEEDEEGS) are enriched in acidic residues. Residues 255 to 280 (IEEEEEDEEGSESVNKRKKEDDMETK) form a disordered region. Residues 268-280 (VNKRKKEDDMETK) show a composition bias toward basic and acidic residues. The active site involves H349.

The protein belongs to the AB hydrolase superfamily. As to quaternary structure, binds PPP2CA and PPP2CB. Phosphorylated by SIK1 following increases in intracellular sodium, leading to dissociation from the protein phosphatase 2A (PP2A) complex and subsequent dephosphorylation of sodium/potassium-transporting ATPase ATP1A1.

The catalysed reaction is [phosphatase 2A protein]-C-terminal L-leucine methyl ester + H2O = [phosphatase 2A protein]-C-terminal L-leucine + methanol + H(+). Functionally, demethylates proteins that have been reversibly carboxymethylated. Demethylates PPP2CB (in vitro) and PPP2CA. Binding to PPP2CA displaces the manganese ion and inactivates the enzyme. The sequence is that of Protein phosphatase methylesterase 1 (PPME1) from Bos taurus (Bovine).